A 250-amino-acid polypeptide reads, in one-letter code: Phosphoribosylaminoimidazole-succinocarboxamide synthase (250 aa).

It belongs to the SAICAR synthetase family.

The enzyme catalyses 5-amino-1-(5-phospho-D-ribosyl)imidazole-4-carboxylate + L-aspartate + ATP = (2S)-2-[5-amino-1-(5-phospho-beta-D-ribosyl)imidazole-4-carboxamido]succinate + ADP + phosphate + 2 H(+). It functions in the pathway purine metabolism; IMP biosynthesis via de novo pathway; 5-amino-1-(5-phospho-D-ribosyl)imidazole-4-carboxamide from 5-amino-1-(5-phospho-D-ribosyl)imidazole-4-carboxylate: step 1/2. The sequence is that of Phosphoribosylaminoimidazole-succinocarboxamide synthase from Picosynechococcus sp. (strain ATCC 27264 / PCC 7002 / PR-6) (Agmenellum quadruplicatum).